Consider the following 513-residue polypeptide: QWRF motif-containing protein 9 (513 aa).

Composition is skewed to polar residues over residues 1–26 (MTAA…PSES), 43–55 (GTSS…SPKR), and 65–78 (VTPS…PQST). Disordered stretches follow at residues 1 to 89 (MTAA…RREV), 115 to 144 (GTLE…LSDQ), and 184 to 293 (VSNR…LRVR). Residues 79–89 (PRRESLDRREV) are compositionally biased toward basic and acidic residues. Polar residues-rich tracts occupy residues 202–211 (ESVSSGSSNG) and 244–262 (VDSS…SPRG). Positions 334–337 (QWQF) match the QWRF motif motif.

The protein belongs to the QWRF family.

The chain is QWRF motif-containing protein 9 (QWRF9) from Arabidopsis thaliana (Mouse-ear cress).